Reading from the N-terminus, the 442-residue chain is Divalent metal cation transporter MntH (442 aa).

A run of 11 helical transmembrane segments spans residues 29–49 (MLAY…PGNW), 62–82 (TLLT…SLCV), 106–126 (FCLW…ELLG), 135–155 (FVIP…VLLF), 166–186 (ALVI…ILFS), 209–229 (MLYI…LYLH), 258–278 (FALS…AATF), 295–315 (LLSP…ALLA), 347–367 (LITR…FGEN), 372–392 (LIVL…IPLV), and 413–433 (LAWL…LQSL).

Belongs to the NRAMP family.

The protein resides in the cell inner membrane. In terms of biological role, h(+)-stimulated, divalent metal cation uptake system. The protein is Divalent metal cation transporter MntH of Nostoc sp. (strain PCC 7120 / SAG 25.82 / UTEX 2576).